A 119-amino-acid chain; its full sequence is Large ribosomal subunit protein uL18 (119 aa).

Residues 1–24 (MITKQDKNQVRKKRHARVRSKISG) are disordered. Positions 10–20 (VRKKRHARVRS) are enriched in basic residues.

The protein belongs to the universal ribosomal protein uL18 family. As to quaternary structure, part of the 50S ribosomal subunit; part of the 5S rRNA/L5/L18/L25 subcomplex. Contacts the 5S and 23S rRNAs.

This is one of the proteins that bind and probably mediate the attachment of the 5S RNA into the large ribosomal subunit, where it forms part of the central protuberance. The sequence is that of Large ribosomal subunit protein uL18 from Lysinibacillus sphaericus (strain C3-41).